A 291-amino-acid polypeptide reads, in one-letter code: Nucleotide-binding protein Lm4b_02443 (291 aa).

13-20 contacts ATP; sequence GMSGAGKT. 63 to 66 is a binding site for GTP; the sequence is DLRG.

This sequence belongs to the RapZ-like family.

Its function is as follows. Displays ATPase and GTPase activities. The protein is Nucleotide-binding protein Lm4b_02443 of Listeria monocytogenes serotype 4b (strain CLIP80459).